The sequence spans 471 residues: Ankyrin repeat and death domain-containing protein 1A (471 aa).

10 ANK repeats span residues Val19 to Glu48, Phe52 to Cys81, Asp85 to Leu114, Leu120 to Val149, Glu153 to Glu182, Glu186 to Ala215, Lys219 to Val248, His251 to Ala280, Arg284 to Leu313, and Gln317 to Trp346. Positions Ser379–Val467 constitute a Death domain.

The protein is Ankyrin repeat and death domain-containing protein 1A (ANKDD1A) of Macaca fascicularis (Crab-eating macaque).